Consider the following 342-residue polypeptide: Succinylglutamate desuccinylase (342 aa).

Positions 63, 66, and 155 each coordinate Zn(2+). Glu-219 is a catalytic residue.

It belongs to the AspA/AstE family. Succinylglutamate desuccinylase subfamily. Zn(2+) serves as cofactor.

The enzyme catalyses N-succinyl-L-glutamate + H2O = L-glutamate + succinate. The protein operates within amino-acid degradation; L-arginine degradation via AST pathway; L-glutamate and succinate from L-arginine: step 5/5. Functionally, transforms N(2)-succinylglutamate into succinate and glutamate. This is Succinylglutamate desuccinylase from Vibrio campbellii (strain ATCC BAA-1116).